A 432-amino-acid polypeptide reads, in one-letter code: Ribosome biogenesis protein WDR12 homolog (432 aa).

Positions 13–97 (LQIRLVALNK…ESVIEVVYFQ (85 aa)) are ubiquitin-like (UBL) domain. WD repeat units follow at residues 109-146 (LHSD…YAIF), 148-190 (GHES…KSVE), 197-236 (GHTQ…KDDD), 265-303 (GHTD…NKSD), 305-345 (NVNK…DQTV), 352-392 (SHKN…APLY), and 396-432 (GHED…AQRS).

It belongs to the WD repeat WDR12/YTM1 family.

It localises to the nucleus. The protein resides in the nucleolus. It is found in the nucleoplasm. Its function is as follows. Required for maturation of ribosomal RNAs and formation of the large ribosomal subunit. This Trichoplax adhaerens (Trichoplax reptans) protein is Ribosome biogenesis protein WDR12 homolog.